Consider the following 432-residue polypeptide: MNFDVAIIGGGLAGLTCGIAIQQRGKRCVIINNGQAAIDFASGSLDLLSRMPSTSNGESRTVENLKENITALRNELPAHPYSLLGAEKVLAKAQDFERLANELHLDLIGSTEKNHWRVTGLGSLRGAWLSPNSVPTVQGNELFPHKRIAVLGIEGYHDFQPQLLAANLVLNPQFEHCEVTSGFLNIPQLDELRKNAREFRSVNISQLLEHKLAFKDLVKEIIESSQGAEAVFLPACFGLENQEFMTALRDATKLALFELPTLPPSLLGMRQRIQLRHKFESLGGLMINGDSALNATFEGNKVRCINTRLLEDEEITADNFVLASGSFFSKGLISEFDKIYEPVFESDIIGVEGFNQKDRFTWTVHRFAHPQPYQSAGVAINAQCQVQKCGQFLTNLYAVGNVIGGFNALELGCGSGVAVVTALAVADEILAK.

The protein belongs to the anaerobic G-3-P dehydrogenase subunit B family. As to quaternary structure, composed of a catalytic GlpA/B dimer and of membrane bound GlpC. The cofactor is FMN.

The catalysed reaction is a quinone + sn-glycerol 3-phosphate = dihydroxyacetone phosphate + a quinol. The protein operates within polyol metabolism; glycerol degradation via glycerol kinase pathway; glycerone phosphate from sn-glycerol 3-phosphate (anaerobic route): step 1/1. In terms of biological role, conversion of glycerol 3-phosphate to dihydroxyacetone. Uses fumarate or nitrate as electron acceptor. The sequence is that of Anaerobic glycerol-3-phosphate dehydrogenase subunit B from Haemophilus influenzae (strain PittGG).